Consider the following 204-residue polypeptide: Large ribosomal subunit protein uL10 (204 aa).

A disordered region spans residues 170–204 (AADPSVIGGAGEASDQEPKTTETPEASAAQDNTNE). Positions 192-204 (TPEASAAQDNTNE) are enriched in polar residues.

This sequence belongs to the universal ribosomal protein uL10 family. Part of the ribosomal stalk of the 50S ribosomal subunit. The N-terminus interacts with L11 and the large rRNA to form the base of the stalk. The C-terminus forms an elongated spine to which L12 dimers bind in a sequential fashion forming a multimeric L10(L12)X complex.

Its function is as follows. Forms part of the ribosomal stalk, playing a central role in the interaction of the ribosome with GTP-bound translation factors. This Cutibacterium acnes (strain DSM 16379 / KPA171202) (Propionibacterium acnes) protein is Large ribosomal subunit protein uL10.